A 433-amino-acid chain; its full sequence is UPF0597 protein Spea_0809 (433 aa).

Belongs to the UPF0597 family.

The chain is UPF0597 protein Spea_0809 from Shewanella pealeana (strain ATCC 700345 / ANG-SQ1).